Here is a 70-residue protein sequence, read N- to C-terminus: Delta-hexatoxin-Mg1b (70 aa).

Residues 1–26 (MKILEKALLENDSAAEEESRNLRTKR) form the signal peptide. Disulfide bonds link C27–C41, C34–C46, C40–C57, and C42–C68.

In terms of tissue distribution, expressed by the venom gland.

Its subcellular location is the secreted. Inhibits tetrodotoxin-sensitive sodium channels (Nav). Intracranial injection into mice causes strong convulsions and death. Intrathorax injection into crickets causes paralysis prolonged for 2 minutes, followed by recovery. The chain is Delta-hexatoxin-Mg1b from Macrothele gigas (Japanese funnel web spider).